Here is a 219-residue protein sequence, read N- to C-terminus: Thiopurine S-methyltransferase (219 aa).

4 residues coordinate S-adenosyl-L-methionine: Trp10, Leu45, Glu66, and Arg123.

This sequence belongs to the class I-like SAM-binding methyltransferase superfamily. TPMT family.

The protein localises to the cytoplasm. The catalysed reaction is S-adenosyl-L-methionine + a thiopurine = S-adenosyl-L-homocysteine + a thiopurine S-methylether.. The polypeptide is Thiopurine S-methyltransferase (Shewanella pealeana (strain ATCC 700345 / ANG-SQ1)).